The following is an 830-amino-acid chain: Frameshifted structural polyprotein (830 aa).

Positions 58–109 (AIAPARPPKPKKKKTTKPKPKTQPKKINGKTQQQKKKDKQADKKKKKPGKRE) are disordered. Residues 65–107 (PKPKKKKTTKPKPKTQPKKINGKTQQQKKKDKQADKKKKKPGK) are compositionally biased toward basic residues. The segment at 94–106 (KDKQADKKKKKPG) is ribosome-binding. Cys119 and Cys134 are oxidised to a cystine. Residues 119-267 (CIFEVKHEGK…RVTPEGSEEW (149 aa)) form the Peptidase S3 domain. Residues His145, Asp167, and Ser219 each act as charge relay system in the active site. N-linked (GlcNAc...) asparagine; by host glycosylation is found at Asn280, Asn327, Asn533, and Asn595. A helical transmembrane segment spans residues 702–722 (AVVGMSLLALISIFASCYMLV). 4 S-palmitoyl cysteine; by host lipidation sites follow: Cys718, Cys728, Cys748, and Cys749. Residues 728-748 (CLTPYALTPGAAVPWTLGILC) form a transient transmembrane before p62-6K protein processing region. 2 consecutive transmembrane segments (helical) span residues 771-791 (ALFW…TYCL) and 793-813 (NVLC…RGHR).

In terms of assembly, homodimer. Homomultimer. Interacts with host karyopherin KPNA4; this interaction allows the nuclear import of the viral capsid protein. Precursor of protein E3/E2: The precursor of protein E3/E2 and E1 form a heterodimer shortly after synthesis. Interacts with host IRAK1; the interaction leads to inhibition of IRAK1-dependent signaling. As to quaternary structure, processing of the precursor of protein E3/E2 into E2 and E3 results in a heterodimer of the spike glycoproteins E2 and E1. Spike at virion surface are constituted of three E2-E1 heterodimers. Interacts with 6K protein. Interacts with host MXRA8; this interaction mediates virus entry. In terms of processing, specific enzymatic cleavages in vivo yield mature proteins. Capsid protein is auto-cleaved during polyprotein translation, unmasking a signal peptide at the N-terminus of the precursor of E3/E2. The remaining polyprotein is then targeted to the host endoplasmic reticulum, where host signal peptidase cleaves it into pE2 and TF. pE2 is further processed to mature E3 and E2 by host furin in trans-Golgi vesicle.

Its subcellular location is the virion. It localises to the host cytoplasm. The protein resides in the host cell membrane. It is found in the host nucleus. The protein localises to the virion membrane. The catalysed reaction is Autocatalytic release of the core protein from the N-terminus of the togavirus structural polyprotein by hydrolysis of a -Trp-|-Ser- bond.. Functionally, forms an icosahedral capsid with a T=4 symmetry composed of 240 copies of the capsid protein surrounded by a lipid membrane through which penetrate 80 spikes composed of trimers of E1-E2 heterodimers. The capsid protein binds to the viral RNA genome at a site adjacent to a ribosome binding site for viral genome translation following genome release. Possesses a protease activity that results in its autocatalytic cleavage from the nascent structural protein. Following its self-cleavage, the capsid protein transiently associates with ribosomes, and within several minutes the protein binds to viral RNA and rapidly assembles into icosahedric core particles. The resulting nucleocapsid eventually associates with the cytoplasmic domain of the spike glycoprotein E2 at the cell membrane, leading to budding and formation of mature virions. In case of infection, new virions attach to target cells and after clathrin-mediated endocytosis their membrane fuses with the host endosomal membrane. This leads to the release of the nucleocapsid into the cytoplasm, followed by an uncoating event necessary for the genomic RNA to become accessible. The uncoating might be triggered by the interaction of capsid proteins with ribosomes. Binding of ribosomes would release the genomic RNA since the same region is genomic RNA-binding and ribosome-binding. Specifically inhibits interleukin-1 receptor-associated kinase 1/IRAK1-dependent signaling during viral entry, representing a means by which the alphaviruses may evade innate immune detection and activation prior to viral gene expression. In terms of biological role, provides the signal sequence for p62 (E3/E2) translocation to the host endoplasmic reticulum. Mediates pH protection of E1 during secretory pathway trans- port. Its function is as follows. Plays a role in viral attachment to target host cell, by binding to the cell receptor. Synthesized as a p62 precursor which is processed by furin at the cell membrane just before virion budding, giving rise to E2-E1 heterodimer. The p62-E1 heterodimer is stable, whereas E2-E1 is unstable and dissociate at low pH. p62 is processed at the last step, presumably to avoid E1 fusion activation before its final export to cell surface. E2 C-terminus contains a transitory transmembrane that would be disrupted by palmitoylation, resulting in reorientation of the C-terminal tail from lumenal to cytoplasmic side. This step is critical since E2 C-terminus is involved in budding by interacting with capsid proteins. This release of E2 C-terminus in cytoplasm occurs lately in protein export, and precludes premature assembly of particles at the endoplasmic reticulum membrane. Virion component that may play a role during viral assembly. The protein is Frameshifted structural polyprotein of Aedes (Middle-African hedgehog).